The sequence spans 219 residues: GPI ethanolamine phosphate transferase, stabilizing subunit (219 aa).

6 helical membrane passes run 11 to 31 (YTNL…SFFV), 42 to 62 (TWLC…YLVV), 86 to 106 (CFLM…APLI), 113 to 133 (FLFA…LLGP), 155 to 175 (LQIT…PIPL), and 189 to 209 (TLGA…WIYW).

It belongs to the PIGF family. In terms of assembly, part of the ethanolamine phosphate transferase 3 complex composed by PIGO and PIGF. Part of the ethanolamine phosphate transferase 2 complex with PIGG. PIGF is required to stabilize PIGG and PIGO.

It localises to the endoplasmic reticulum membrane. It participates in glycolipid biosynthesis; glycosylphosphatidylinositol-anchor biosynthesis. Its function is as follows. Stabilizing subunit of the ethanolamine phosphate transferase 3 and ethanolamine phosphate transferase 2 complexes that sequentially transfer an ethanolamine phosphate (EtNP) from a phosphatidylethanolamine (PE) to the 6-OH position of the third alpha-1,2-linked mannose and the second alpha-1,6-linked mannose of the alpha-D-Man-(1-&gt;2)-alpha-D-Man-(1-&gt;6)-2-PEtn-alpha-D-Man-(1-&gt;4)-alpha-D-GlcN-(1-&gt;6)-(1-radyl,2-acyl-sn-glycero-3-phospho)-2-acyl-inositol (also termed H6) intermediate to generate a 6-PEtn-alpha-D-Man-(1-&gt;2)-6-PEtn-alpha-D-Man-(1-&gt;6)-2-PEtn-alpha-D-Man-(1-&gt;4)-alpha-D-GlcN-(1-&gt;6)-(1-radyl,2-acyl-sn-glycero-3-phospho)-2-acyl-inositol (also termed H8). Participates in the tenth and eleventh steps of the glycosylphosphatidylinositol-anchor biosynthesis, in association with PIGO and PIGG, respectively. This chain is GPI ethanolamine phosphate transferase, stabilizing subunit, found in Mus musculus (Mouse).